Consider the following 232-residue polypeptide: Large ribosomal subunit protein uL1 (232 aa).

It belongs to the universal ribosomal protein uL1 family. Part of the 50S ribosomal subunit.

Its function is as follows. Binds directly to 23S rRNA. The L1 stalk is quite mobile in the ribosome, and is involved in E site tRNA release. Functionally, protein L1 is also a translational repressor protein, it controls the translation of the L11 operon by binding to its mRNA. This is Large ribosomal subunit protein uL1 from Pelotomaculum thermopropionicum (strain DSM 13744 / JCM 10971 / SI).